Reading from the N-terminus, the 398-residue chain is Acetate kinase 1 (398 aa).

Asn-9 provides a ligand contact to Mg(2+). Lys-16 contacts ATP. A substrate-binding site is contributed by Arg-89. The active-site Proton donor/acceptor is Asp-146. ATP is bound by residues 206-210, 281-283, and 329-333; these read HLGNG, DCR, and GIGEN. Mg(2+) is bound at residue Glu-384.

Belongs to the acetokinase family. Homodimer. Requires Mg(2+) as cofactor. It depends on Mn(2+) as a cofactor.

The protein localises to the cytoplasm. The catalysed reaction is acetate + ATP = acetyl phosphate + ADP. It participates in metabolic intermediate biosynthesis; acetyl-CoA biosynthesis; acetyl-CoA from acetate: step 1/2. In terms of biological role, catalyzes the formation of acetyl phosphate from acetate and ATP. Can also catalyze the reverse reaction. The sequence is that of Acetate kinase 1 from Vibrio parahaemolyticus serotype O3:K6 (strain RIMD 2210633).